The following is a 398-amino-acid chain: MKAITLVGSTGSIGTQTLDIVTQYPDQFRIVGLAAGNNVEMLAAQIRQFRPKIAAICSEDKLPALKEAIIDLDPQPILLAGEAGVIEVARYGDAQTVVTGIVGCAGLLPTIAAIEAGKDIALANKETLIAGAPVVLPLVEKHGVKLLPADSEHSAIFQCLQGVPKSGLRKILLTASGGAFRDWDVERLADVTVADALKHPNWSMGRKITVDSATLMNKGLEVIEAHFLFGLDYDNIEIVIHPQSIIHSLIELQDTSVLAQLGWPDMRLPLLYALSWPDRIYTDWERLDLVKAGNLTFREPDHQKYPCMQLAYAVGKAGGSMPAVLNAANEQAVALFLDEKIRFLDIPRCIEWVCDRHQNDNRANPSLDDILAADKWARQEVLTATEKLETPSRIISLR.

The NADPH site is built by Thr10, Gly11, Ser12, Ile13, Gly36, Asn38, and Asn124. Residue Lys125 coordinates 1-deoxy-D-xylulose 5-phosphate. Glu126 is a binding site for NADPH. Asp150 contacts Mn(2+). Positions 151, 152, 176, and 199 each coordinate 1-deoxy-D-xylulose 5-phosphate. Residue Glu152 participates in Mn(2+) binding. Gly205 contributes to the NADPH binding site. Residues Ser212, Asn217, Lys218, and Glu221 each coordinate 1-deoxy-D-xylulose 5-phosphate. Glu221 provides a ligand contact to Mn(2+).

It belongs to the DXR family. It depends on Mg(2+) as a cofactor. Mn(2+) is required as a cofactor.

It carries out the reaction 2-C-methyl-D-erythritol 4-phosphate + NADP(+) = 1-deoxy-D-xylulose 5-phosphate + NADPH + H(+). It participates in isoprenoid biosynthesis; isopentenyl diphosphate biosynthesis via DXP pathway; isopentenyl diphosphate from 1-deoxy-D-xylulose 5-phosphate: step 1/6. Functionally, catalyzes the NADPH-dependent rearrangement and reduction of 1-deoxy-D-xylulose-5-phosphate (DXP) to 2-C-methyl-D-erythritol 4-phosphate (MEP). The chain is 1-deoxy-D-xylulose 5-phosphate reductoisomerase from Nostoc punctiforme (strain ATCC 29133 / PCC 73102).